Here is a 349-residue protein sequence, read N- to C-terminus: Protein RecA (349 aa).

64-71 (GPESSGKT) provides a ligand contact to ATP.

This sequence belongs to the RecA family.

The protein resides in the cytoplasm. In terms of biological role, can catalyze the hydrolysis of ATP in the presence of single-stranded DNA, the ATP-dependent uptake of single-stranded DNA by duplex DNA, and the ATP-dependent hybridization of homologous single-stranded DNAs. It interacts with LexA causing its activation and leading to its autocatalytic cleavage. The sequence is that of Protein RecA from Rhodopseudomonas palustris (strain ATCC BAA-98 / CGA009).